We begin with the raw amino-acid sequence, 356 residues long: PEP-dependent dihydroxyacetone kinase, dihydroxyacetone-binding subunit DhaK (356 aa).

Residues 7–352 enclose the DhaK domain; sequence DVQDVLDEQL…WDAPVHTPAL (346 aa). Dihydroxyacetone-binding positions include 53 to 56, Lys104, and Asp109; that span reads GSGH. The active-site Proton acceptor is the His56. Catalysis depends on His218, which acts as the Tele-hemiaminal-histidine intermediate.

Homodimer. The dihydroxyacetone kinase complex is composed of a homodimer of DhaM, a homodimer of DhaK and the subunit DhaL. DhaL also forms a complex with DhaR.

It carries out the reaction dihydroxyacetone + phosphoenolpyruvate = dihydroxyacetone phosphate + pyruvate. The protein operates within polyol metabolism; glycerol degradation. Inhibited by chloro-3-hydroxyacetone and D,L-glyceraldehyde. Functionally, dihydroxyacetone binding subunit of the dihydroxyacetone kinase, which is responsible for the phosphoenolpyruvate (PEP)-dependent phosphorylation of dihydroxyacetone via a phosphoryl group transfer from DhaL-ATP. Binds covalently dihydroxyacetone in hemiaminal linkage. DhaK also acts as corepressor of the transcription activator DhaR by binding to the sensor domain of DhaR. In the presence of dihydroxyacetone, DhaL-ADP displaces DhaK and stimulates DhaR activity. In the absence of dihydroxyacetone, DhaL-ADP is converted by the PTS to DhaL-ATP, which does not bind to DhaR. This chain is PEP-dependent dihydroxyacetone kinase, dihydroxyacetone-binding subunit DhaK, found in Escherichia coli (strain K12).